The sequence spans 141 residues: Lysozyme P (141 aa).

Positions 1–18 (MKAFLVICALTLTAVATQ) are cleaved as a signal peptide. In terms of domain architecture, C-type lysozyme spans 20–141 (RTMDRCSLAR…GSLPSINSCF (122 aa)). 4 disulfide bridges follow: cysteine 25-cysteine 140, cysteine 46-cysteine 130, cysteine 81-cysteine 97, and cysteine 93-cysteine 111. Residues glutamate 51 and aspartate 69 contribute to the active site.

This sequence belongs to the glycosyl hydrolase 22 family. As to expression, salivary gland.

The enzyme catalyses Hydrolysis of (1-&gt;4)-beta-linkages between N-acetylmuramic acid and N-acetyl-D-glucosamine residues in a peptidoglycan and between N-acetyl-D-glucosamine residues in chitodextrins.. In terms of biological role, unlikely to play an active role in the humoral immune defense. May have a function in the digestion of bacteria in the food. The chain is Lysozyme P (LysP) from Drosophila melanogaster (Fruit fly).